The sequence spans 447 residues: ATP-dependent protease ATPase subunit HslU (447 aa).

Residues Ile-18, 60-65 (GVGKTE), Asp-259, Glu-325, and Arg-397 each bind ATP.

This sequence belongs to the ClpX chaperone family. HslU subfamily. In terms of assembly, a double ring-shaped homohexamer of HslV is capped on each side by a ring-shaped HslU homohexamer. The assembly of the HslU/HslV complex is dependent on binding of ATP.

Its subcellular location is the cytoplasm. Its function is as follows. ATPase subunit of a proteasome-like degradation complex; this subunit has chaperone activity. The binding of ATP and its subsequent hydrolysis by HslU are essential for unfolding of protein substrates subsequently hydrolyzed by HslV. HslU recognizes the N-terminal part of its protein substrates and unfolds these before they are guided to HslV for hydrolysis. The sequence is that of ATP-dependent protease ATPase subunit HslU from Burkholderia cenocepacia (strain ATCC BAA-245 / DSM 16553 / LMG 16656 / NCTC 13227 / J2315 / CF5610) (Burkholderia cepacia (strain J2315)).